The chain runs to 245 residues: 1-(5-phosphoribosyl)-5-[(5-phosphoribosylamino)methylideneamino] imidazole-4-carboxamide isomerase (245 aa).

Catalysis depends on Asp-7, which acts as the Proton acceptor. The Proton donor role is filled by Asp-129.

The protein belongs to the HisA/HisF family.

The protein localises to the cytoplasm. The catalysed reaction is 1-(5-phospho-beta-D-ribosyl)-5-[(5-phospho-beta-D-ribosylamino)methylideneamino]imidazole-4-carboxamide = 5-[(5-phospho-1-deoxy-D-ribulos-1-ylimino)methylamino]-1-(5-phospho-beta-D-ribosyl)imidazole-4-carboxamide. It participates in amino-acid biosynthesis; L-histidine biosynthesis; L-histidine from 5-phospho-alpha-D-ribose 1-diphosphate: step 4/9. This chain is 1-(5-phosphoribosyl)-5-[(5-phosphoribosylamino)methylideneamino] imidazole-4-carboxamide isomerase, found in Salmonella arizonae (strain ATCC BAA-731 / CDC346-86 / RSK2980).